The primary structure comprises 191 residues: Thymidine kinase (191 aa).

Residues 15 to 22 (GPMYSGKT) and 88 to 91 (DEAQ) each bind ATP. Glu89 acts as the Proton acceptor in catalysis. Cys145, Cys148, Cys183, and Cys186 together coordinate Zn(2+).

The protein belongs to the thymidine kinase family. Homotetramer.

It localises to the cytoplasm. It catalyses the reaction thymidine + ATP = dTMP + ADP + H(+). This Clostridium botulinum (strain Loch Maree / Type A3) protein is Thymidine kinase.